Reading from the N-terminus, the 194-residue chain is Crossover junction endodeoxyribonuclease RuvC (194 aa).

Residues D8, E72, and D144 contribute to the active site. Mg(2+) contacts are provided by D8, E72, and D144.

It belongs to the RuvC family. In terms of assembly, homodimer which binds Holliday junction (HJ) DNA. The HJ becomes 2-fold symmetrical on binding to RuvC with unstacked arms; it has a different conformation from HJ DNA in complex with RuvA. In the full resolvosome a probable DNA-RuvA(4)-RuvB(12)-RuvC(2) complex forms which resolves the HJ. Mg(2+) serves as cofactor.

The protein resides in the cytoplasm. The enzyme catalyses Endonucleolytic cleavage at a junction such as a reciprocal single-stranded crossover between two homologous DNA duplexes (Holliday junction).. The RuvA-RuvB-RuvC complex processes Holliday junction (HJ) DNA during genetic recombination and DNA repair. Endonuclease that resolves HJ intermediates. Cleaves cruciform DNA by making single-stranded nicks across the HJ at symmetrical positions within the homologous arms, yielding a 5'-phosphate and a 3'-hydroxyl group; requires a central core of homology in the junction. The consensus cleavage sequence is 5'-(A/T)TT(C/G)-3'. Cleavage occurs on the 3'-side of the TT dinucleotide at the point of strand exchange. HJ branch migration catalyzed by RuvA-RuvB allows RuvC to scan DNA until it finds its consensus sequence, where it cleaves and resolves the cruciform DNA. This Psychrobacter arcticus (strain DSM 17307 / VKM B-2377 / 273-4) protein is Crossover junction endodeoxyribonuclease RuvC.